We begin with the raw amino-acid sequence, 428 residues long: Light-independent protochlorophyllide reductase subunit N (428 aa).

The [4Fe-4S] cluster site is built by cysteine 31, cysteine 56, and cysteine 117.

Belongs to the BchN/ChlN family. Protochlorophyllide reductase is composed of three subunits; BchL, BchN and BchB. Forms a heterotetramer of two BchB and two BchN subunits. The cofactor is [4Fe-4S] cluster.

The enzyme catalyses chlorophyllide a + oxidized 2[4Fe-4S]-[ferredoxin] + 2 ADP + 2 phosphate = protochlorophyllide a + reduced 2[4Fe-4S]-[ferredoxin] + 2 ATP + 2 H2O. It functions in the pathway porphyrin-containing compound metabolism; bacteriochlorophyll biosynthesis (light-independent). In terms of biological role, component of the dark-operative protochlorophyllide reductase (DPOR) that uses Mg-ATP and reduced ferredoxin to reduce ring D of protochlorophyllide (Pchlide) to form chlorophyllide a (Chlide). This reaction is light-independent. The NB-protein (BchN-BchB) is the catalytic component of the complex. This is Light-independent protochlorophyllide reductase subunit N from Rhodopseudomonas palustris (strain BisB5).